Here is a 360-residue protein sequence, read N- to C-terminus: Phosphoserine aminotransferase (360 aa).

An L-glutamate-binding site is contributed by Arg-41. Pyridoxal 5'-phosphate-binding residues include Trp-101, Thr-152, Asp-172, and Gln-195. At Lys-196 the chain carries N6-(pyridoxal phosphate)lysine. 237 to 238 (NT) is a pyridoxal 5'-phosphate binding site.

This sequence belongs to the class-V pyridoxal-phosphate-dependent aminotransferase family. SerC subfamily. Homodimer. The cofactor is pyridoxal 5'-phosphate.

It is found in the cytoplasm. It carries out the reaction O-phospho-L-serine + 2-oxoglutarate = 3-phosphooxypyruvate + L-glutamate. The enzyme catalyses 4-(phosphooxy)-L-threonine + 2-oxoglutarate = (R)-3-hydroxy-2-oxo-4-phosphooxybutanoate + L-glutamate. It participates in amino-acid biosynthesis; L-serine biosynthesis; L-serine from 3-phospho-D-glycerate: step 2/3. The protein operates within cofactor biosynthesis; pyridoxine 5'-phosphate biosynthesis; pyridoxine 5'-phosphate from D-erythrose 4-phosphate: step 3/5. Catalyzes the reversible conversion of 3-phosphohydroxypyruvate to phosphoserine and of 3-hydroxy-2-oxo-4-phosphonooxybutanoate to phosphohydroxythreonine. This chain is Phosphoserine aminotransferase, found in Paraburkholderia phytofirmans (strain DSM 17436 / LMG 22146 / PsJN) (Burkholderia phytofirmans).